The following is a 332-amino-acid chain: Tetraacyldisaccharide 4'-kinase (332 aa).

55–62 contacts ATP; that stretch reads GVGGSGKT.

Belongs to the LpxK family.

It catalyses the reaction a lipid A disaccharide + ATP = a lipid IVA + ADP + H(+). The protein operates within glycolipid biosynthesis; lipid IV(A) biosynthesis; lipid IV(A) from (3R)-3-hydroxytetradecanoyl-[acyl-carrier-protein] and UDP-N-acetyl-alpha-D-glucosamine: step 6/6. Functionally, transfers the gamma-phosphate of ATP to the 4'-position of a tetraacyldisaccharide 1-phosphate intermediate (termed DS-1-P) to form tetraacyldisaccharide 1,4'-bis-phosphate (lipid IVA). The sequence is that of Tetraacyldisaccharide 4'-kinase from Acidithiobacillus ferrooxidans (strain ATCC 53993 / BNL-5-31) (Leptospirillum ferrooxidans (ATCC 53993)).